Consider the following 189-residue polypeptide: MKKYSKKDRQMKLQVAIEENPFITDEQLAEKFGVIVQTIRLDRVALSIPELRERIKHVASVNYADAVKSLPIDEVIGEIIDIQLSKSAISIFDVRSEHVFKRNKIARGHHLFAQANSLATAVIPNELALTTQATVRFVRSVYEGERIIAKAKVRPATDNRAITIVDVKSYVGDEIVLKGKFEMYHATQK.

This sequence belongs to the FapR family.

Transcriptional factor involved in regulation of membrane lipid biosynthesis by repressing genes involved in fatty acid and phospholipid metabolism. The sequence is that of Transcription factor FapR from Listeria innocua serovar 6a (strain ATCC BAA-680 / CLIP 11262).